Reading from the N-terminus, the 230-residue chain is Large ribosomal subunit protein uL1 (230 aa).

It belongs to the universal ribosomal protein uL1 family. As to quaternary structure, part of the 50S ribosomal subunit.

Functionally, binds directly to 23S rRNA. The L1 stalk is quite mobile in the ribosome, and is involved in E site tRNA release. In terms of biological role, protein L1 is also a translational repressor protein, it controls the translation of the L11 operon by binding to its mRNA. In Bacillus mycoides (strain KBAB4) (Bacillus weihenstephanensis), this protein is Large ribosomal subunit protein uL1.